The sequence spans 283 residues: Cardiolipin synthase (CMP-forming) (283 aa).

3 consecutive transmembrane segments (helical) span residues 83 to 103, 155 to 175, and 209 to 229; these read PFIG…LFAF, VSIA…ALFI, and LSKW…LLLL.

This sequence belongs to the CDP-alcohol phosphatidyltransferase class-I family. As to quaternary structure, may be found in a large complex. Mg(2+) serves as cofactor.

The protein localises to the mitochondrion inner membrane. The catalysed reaction is a CDP-1,2-diacyl-sn-glycerol + a 1,2-diacyl-sn-glycero-3-phospho-(1'-sn-glycerol) = a cardiolipin + CMP + H(+). Catalyzes the synthesis of cardiolipin (CL) (diphosphatidylglycerol) by specifically transferring a phosphatidyl group from CDP-diacylglycerol to phosphatidylglycerol (PG). CL is a key phospholipid in mitochondrial membranes and plays important roles in maintaining the functional integrity and dynamics of mitochondria under both optimal and stress conditions. This is Cardiolipin synthase (CMP-forming) (CRD1) from Saccharomyces cerevisiae (strain ATCC 204508 / S288c) (Baker's yeast).